The chain runs to 423 residues: Pseudouridylate synthase 1 homolog (423 aa).

Residues 32 to 75 (AGNKVPPALASHQPDRKGRGGWVWEETEHPAKRVKGGEDEEPPR) form a disordered region. Residues 57–68 (ETEHPAKRVKGG) are compositionally biased toward basic and acidic residues. Catalysis depends on D142, which acts as the Nucleophile. Residues 403–423 (ADTGAKVPSSLEGSEGDGDTD) are disordered. A phosphoserine mark is found at S411 and S416. Residue T422 is modified to Phosphothreonine.

The protein belongs to the tRNA pseudouridine synthase TruA family. As to quaternary structure, monomer. Forms a complex with RARG and the SRA1 RNA in the nucleus.

The protein resides in the nucleus. The protein localises to the cytoplasm. It localises to the mitochondrion. It catalyses the reaction a uridine in tRNA = a pseudouridine in tRNA. It carries out the reaction uridine(38/39/40) in tRNA = pseudouridine(38/39/40) in tRNA. The enzyme catalyses a uridine in mRNA = a pseudouridine in mRNA. Pseudouridylate synthase that catalyzes pseudouridylation of tRNAs and mRNAs. Acts on positions 27/28 in the anticodon stem and also positions 34 and 36 in the anticodon of an intron containing tRNA. Also catalyzes pseudouridylation of mRNAs: mediates pseudouridylation of mRNAs with the consensus sequence 5'-UGUAG-3'. Acts as a regulator of pre-mRNA splicing by mediating pseudouridylation of pre-mRNAs at locations associated with alternatively spliced regions. Pseudouridylation of pre-mRNAs near splice sites directly regulates mRNA splicing and mRNA 3'-end processing. Involved in regulation of nuclear receptor activity through pseudouridylation of SRA1 mRNA. Its function is as follows. Does not form pseudouridine when expressed in vitro. This chain is Pseudouridylate synthase 1 homolog, found in Mus musculus (Mouse).